Reading from the N-terminus, the 291-residue chain is ATP synthase gamma chain (291 aa).

This sequence belongs to the ATPase gamma chain family. In terms of assembly, F-type ATPases have 2 components, CF(1) - the catalytic core - and CF(0) - the membrane proton channel. CF(1) has five subunits: alpha(3), beta(3), gamma(1), delta(1), epsilon(1). CF(0) has three main subunits: a, b and c.

The protein localises to the cell inner membrane. Functionally, produces ATP from ADP in the presence of a proton gradient across the membrane. The gamma chain is believed to be important in regulating ATPase activity and the flow of protons through the CF(0) complex. The polypeptide is ATP synthase gamma chain (Cupriavidus metallidurans (strain ATCC 43123 / DSM 2839 / NBRC 102507 / CH34) (Ralstonia metallidurans)).